The following is a 909-amino-acid chain: Aconitate hydratase A (909 aa).

Positions 450, 516, and 519 each coordinate [4Fe-4S] cluster.

This sequence belongs to the aconitase/IPM isomerase family. As to quaternary structure, monomer. Requires [4Fe-4S] cluster as cofactor.

The catalysed reaction is citrate = D-threo-isocitrate. The enzyme catalyses 3-hydroxybutane-1,2,3-tricarboxylate = 2-methyl-cis-aconitate + H2O. It participates in carbohydrate metabolism; tricarboxylic acid cycle; isocitrate from oxaloacetate: step 2/2. Involved in both the tricarboxylic acid (TCA) and methylcitric acid cycles. Catalyzes the reversible isomerization of citrate to isocitrate via cis-aconitate. Also catalyzes the rehydration of 2-methyl-cis-aconitate to produce 2-methylisocitrate. The apo form of AcnA functions as a RNA-binding regulatory protein which plays a role in the regulation of citrate concentration and in the sporulation. To prevent the accumulation of excessive levels of citrate, it binds near the 5' end of the citZ mRNA, decreasing its stability and thereby limiting the concentration of citrate synthase in the cell. Aconitase also binds to the gerE transcript late in sporulation and stabilizes it for translation, thereby increasing the rate and level of GerE protein accumulation. In Bacillus subtilis (strain 168), this protein is Aconitate hydratase A (citB).